A 237-amino-acid chain; its full sequence is MDKVCAVFGGSRGIGRAVARLMAQRGYRLAIVARNLEGARAAAGDLGGDHLALSCDVAKEHDVQNTFEEIEKNLGRVNFLVNAAGINRDNLLVRTNTEDMLSQLHTNLLGSMLTCRAALKTMIKQQRGSIVNVGSVVGLKGNSGQSVYSASKGGLVGFSRALAKEVAKKKIRVNVVAPGFIHTDMTKDLNEELLKKNIPLGRFGDALDVAQAAVFLLESPYVTGHVLVVDGGLQLTM.

Met-1 carries the post-translational modification N-acetylmethionine. NADP(+)-binding positions include 11 to 14 (SRGI), 34 to 35 (RN), Asp-56, and 83 to 85 (AAG). Ser-135 provides a ligand contact to substrate. NADP(+) contacts are provided by residues Tyr-148, Lys-152, and 181–183 (IHT). The Proton acceptor role is filled by Tyr-148. Lys-195 bears the N6-acetyllysine mark.

Belongs to the short-chain dehydrogenases/reductases (SDR) family. As to quaternary structure, homotetramer (in vitro). Heterotetramer with HSD17B8; contains two molecules each of HSD17B8 and CBR4. Does not form homotetramers when HSD17B8 is coexpressed, only heterotetramers (in vitro).

The protein resides in the mitochondrion matrix. The enzyme catalyses a (3R)-hydroxyacyl-[ACP] + NADP(+) = a 3-oxoacyl-[ACP] + NADPH + H(+). It carries out the reaction a quinone + NADPH + H(+) = a quinol + NADP(+). It functions in the pathway lipid metabolism; fatty acid biosynthesis. Functionally, component of the heterotetramer complex KAR (3-ketoacyl-[acyl carrier protein] reductase or 3-ketoacyl-[ACP] reductase) that forms part of the mitochondrial fatty acid synthase (mtFAS). Beta-subunit of the KAR heterotetramer complex, responsible for the 3-ketoacyl-ACP reductase activity of the mtFAS, reduces 3-oxoacyl-[ACP] to (3R)-hydroxyacyl-[ACP] in a NADPH-dependent manner with no chain length preference, thereby participating in mitochondrial fatty acid biosynthesis. The homotetramer has NADPH-dependent quinone reductase activity (in vitro), hence could play a role in protection against cytotoxicity of exogenous quinones. As a heterotetramer, it can also reduce 9,10-phenanthrenequinone, 1,4-benzoquinone and various other o-quinones and p-quinones (in vitro). This is 3-oxoacyl-[acyl-carrier-protein] reductase (CBR4) from Bos taurus (Bovine).